The following is a 203-amino-acid chain: MSIKYVATSKLPTPWGVFAMHGFEDTETGKEHVALTFGSLSSDEPVLGRIHSECLTGDALFSLRCDCGFQLQTAMQNIAETGSGFILYLRQEGRGIGLLNKIRAYELQDKGANTVEANEQLGFPADMRKYDMIQPMLEKIGVKHVRLMTNNPRKVKAMKEIGIEVVERVPLQVGKNRYNEAYLKTKSTELGHMMSEYHFTDEE.

A GTP-binding site is contributed by 49–53; that stretch reads RIHSE. C54, C65, and C67 together coordinate Zn(2+). GTP-binding positions include Q70, 92–94, and T114; that span reads EGR. The Proton acceptor role is filled by D126. R128 serves as the catalytic Nucleophile. Residues T149 and K154 each contribute to the GTP site.

Belongs to the GTP cyclohydrolase II family. Zn(2+) is required as a cofactor.

It catalyses the reaction GTP + 4 H2O = 2,5-diamino-6-hydroxy-4-(5-phosphoribosylamino)-pyrimidine + formate + 2 phosphate + 3 H(+). It participates in cofactor biosynthesis; riboflavin biosynthesis; 5-amino-6-(D-ribitylamino)uracil from GTP: step 1/4. Catalyzes the conversion of GTP to 2,5-diamino-6-ribosylamino-4(3H)-pyrimidinone 5'-phosphate (DARP), formate and pyrophosphate. The chain is GTP cyclohydrolase-2 from Shewanella oneidensis (strain ATCC 700550 / JCM 31522 / CIP 106686 / LMG 19005 / NCIMB 14063 / MR-1).